The sequence spans 313 residues: Ribonuclease Z (313 aa).

7 residues coordinate Zn(2+): His62, His64, Asp66, His67, His142, Asp212, and His270. The active-site Proton acceptor is Asp66.

The protein belongs to the RNase Z family. Homodimer. It depends on Zn(2+) as a cofactor.

The enzyme catalyses Endonucleolytic cleavage of RNA, removing extra 3' nucleotides from tRNA precursor, generating 3' termini of tRNAs. A 3'-hydroxy group is left at the tRNA terminus and a 5'-phosphoryl group is left at the trailer molecule.. In terms of biological role, zinc phosphodiesterase, which displays some tRNA 3'-processing endonuclease activity. Probably involved in tRNA maturation, by removing a 3'-trailer from precursor tRNA. This is Ribonuclease Z from Cytophaga hutchinsonii (strain ATCC 33406 / DSM 1761 / CIP 103989 / NBRC 15051 / NCIMB 9469 / D465).